Here is a 57-residue protein sequence, read N- to C-terminus: Insulin (57 aa).

Cystine bridges form between Cys-12–Cys-43, Cys-24–Cys-56, and Cys-42–Cys-47.

The protein belongs to the insulin family. As to quaternary structure, heterodimer of a B chain and an A chain linked by two disulfide bonds.

Its subcellular location is the secreted. Functionally, insulin decreases blood glucose concentration. It increases cell permeability to monosaccharides, amino acids and fatty acids. It accelerates glycolysis, the pentose phosphate cycle, and glycogen synthesis in liver. The chain is Insulin (ins) from Lampetra fluviatilis (European river lamprey).